The sequence spans 216 residues: Adenylate kinase (216 aa).

G11–T16 serves as a coordination point for ATP. Residues A31–V60 form an NMP region. Residues T32, R37, E58–V60, G86–R89, and Q93 each bind AMP. Residues G127 to D163 form an LID region. R128 serves as a coordination point for ATP. C131, C134, C150, and C153 together coordinate Zn(2+). AMP-binding residues include R160 and R171. A199 serves as a coordination point for ATP.

This sequence belongs to the adenylate kinase family. Monomer.

The protein localises to the cytoplasm. It catalyses the reaction AMP + ATP = 2 ADP. Its pathway is purine metabolism; AMP biosynthesis via salvage pathway; AMP from ADP: step 1/1. Its function is as follows. Catalyzes the reversible transfer of the terminal phosphate group between ATP and AMP. Plays an important role in cellular energy homeostasis and in adenine nucleotide metabolism. This Dehalococcoides mccartyi (strain ATCC BAA-2100 / JCM 16839 / KCTC 5957 / BAV1) protein is Adenylate kinase.